The following is a 392-amino-acid chain: Tryptophan 2,3-dioxygenase (392 aa).

Substrate contacts are provided by residues 57-61 and Arg-128; that span reads FIVTH. His-313 provides a ligand contact to heme. Residue Thr-328 participates in substrate binding.

Belongs to the tryptophan 2,3-dioxygenase family. In terms of assembly, homotetramer. Dimer of dimers. Heme is required as a cofactor.

It catalyses the reaction L-tryptophan + O2 = N-formyl-L-kynurenine. It functions in the pathway amino-acid degradation; L-tryptophan degradation via kynurenine pathway; L-kynurenine from L-tryptophan: step 1/2. It participates in pigment biosynthesis; ommochrome biosynthesis. In terms of biological role, heme-dependent dioxygenase that catalyzes the oxidative cleavage of the L-tryptophan (L-Trp) pyrrole ring and converts L-tryptophan to N-formyl-L-kynurenine. Catalyzes the oxidative cleavage of the indole moiety. The protein is Tryptophan 2,3-dioxygenase of Anopheles gambiae (African malaria mosquito).